A 143-amino-acid polypeptide reads, in one-letter code: MESTLGSDLARLVRVWRALIDPRLKPLELTQTHWVTLYNINRLPPEQSQIQLAKAIGIEQPSLVRTLDQLEEKGLITRHTCANDRRAKRIKLTEQSSPIIEQVDGVICSTRKEILGGISSDEIAVLSGLIDKLEKNIIQLQTK.

Residues 2 to 135 (ESTLGSDLAR…LSGLIDKLEK (134 aa)) form the HTH marR-type domain. Residues 49 to 72 (QIQLAKAIGIEQPSLVRTLDQLEE) constitute a DNA-binding region (H-T-H motif).

The protein belongs to the SlyA family. Homodimer.

In terms of biological role, transcription regulator that can specifically activate or repress expression of target genes. The chain is Transcriptional regulator SlyA from Yersinia pestis bv. Antiqua (strain Antiqua).